The following is a 530-amino-acid chain: Tetrahydroberberine oxidase (530 aa).

Positions 1-24 are cleaved as a signal peptide; it reads MSKMASSIFATFSLLSSLLPTSLA. A disulfide bridge connects residues Cys-36 and Cys-94. A glycan (N-linked (GlcNAc...) asparagine) is linked at Asn-51. Residues 72 to 246 enclose the FAD-binding PCMH-type domain; that stretch reads TTPKPNFIVT…LAWKIRLVPV (175 aa). A cross-link (6-(S-cysteinyl)-8alpha-(pros-histidyl)-FAD (His-Cys)) is located at residues 109 to 171; it reads HDFEGLSYVS…GVHAFPAGLC (63 aa). Asn-483 is a glycosylation site (N-linked (GlcNAc...) asparagine).

It belongs to the oxygen-dependent FAD-linked oxidoreductase family. Requires FAD as cofactor. In terms of processing, the FAD cofactor is bound via a bicovalent 6-S-cysteinyl, 8alpha-N1-histidyl FAD linkage.

It carries out the reaction (S)-canadine + 2 O2 + H(+) = berberine + 2 H2O2. Catalyzes the oxidation of different tetrahydroprotoberberines, such as (S)-canadine, (S)-scoulerine and (S)-corypalmine. Catalyzes the oxidation of (S)-coreximine and (S)-tetrahydropalmatine. Catalyzes the oxidation of different 1-benzylisoquinoline alkaloids, such as (S)-norreticuline, (S)-nororientaline, (S)-coclaurine and (S)-norisoorientaline. Exhibits strict specificity for the (S)-enantiomer of tetrahydroprotoberbirines and 1-benzylisoquinoline alkaloids. This is Tetrahydroberberine oxidase from Berberis wilsoniae (Mrs Wilson's barberry).